The sequence spans 432 residues: Adenylosuccinate synthetase (432 aa).

GTP is bound by residues Gly13 to Lys19 and Gly41 to Thr43. The Proton acceptor role is filled by Asp14. 2 residues coordinate Mg(2+): Asp14 and Gly41. Residues Asp14–Lys17, Asn39–His42, Thr130, Arg144, Gln225, Thr240, and Arg304 contribute to the IMP site. The active-site Proton donor is the His42. Ala300–Arg306 contacts substrate. Residues Arg306, Lys332–Asp334, and Ser415–Gly417 contribute to the GTP site.

Belongs to the adenylosuccinate synthetase family. In terms of assembly, homodimer. The cofactor is Mg(2+).

Its subcellular location is the cytoplasm. The catalysed reaction is IMP + L-aspartate + GTP = N(6)-(1,2-dicarboxyethyl)-AMP + GDP + phosphate + 2 H(+). It participates in purine metabolism; AMP biosynthesis via de novo pathway; AMP from IMP: step 1/2. Functionally, plays an important role in the de novo pathway of purine nucleotide biosynthesis. Catalyzes the first committed step in the biosynthesis of AMP from IMP. In Yersinia pestis bv. Antiqua (strain Antiqua), this protein is Adenylosuccinate synthetase.